The primary structure comprises 102 residues: UPF0213 protein XAC3202 (102 aa).

In terms of domain architecture, GIY-YIG spans 5 to 80 (KPWHLYLLLC…KRLPRARKLA (76 aa)).

Belongs to the UPF0213 family.

In Xanthomonas axonopodis pv. citri (strain 306), this protein is UPF0213 protein XAC3202.